A 267-amino-acid chain; its full sequence is MKEKLTKALQALKHKTPLVHAITNVVTVNDCANSLLAVGASPAMCEAADEVFEFSQLAGSLYLNLGTLTKEQEMAAYLAIRGATLKGIPVILDPVACGAIPRKKATIERLGHFGRFTVIKGNLGEVKALAGLAARVRGVDSLDEGNDGLEACQSLARAYGCVVAATGKVDIVADGQRACLIENGTEMLTRITGAGCMAGALVAGFCGAYEDAFGATVAALLTMSLAGELAQETSGGELPGTFRAHLIDQLSLVDEALIEKRGRVQWL.

M44 provides a ligand contact to substrate. ATP is bound by residues K120 and T166. G193 contacts substrate.

It belongs to the Thz kinase family. It depends on Mg(2+) as a cofactor.

The catalysed reaction is 5-(2-hydroxyethyl)-4-methylthiazole + ATP = 4-methyl-5-(2-phosphooxyethyl)-thiazole + ADP + H(+). It participates in cofactor biosynthesis; thiamine diphosphate biosynthesis; 4-methyl-5-(2-phosphoethyl)-thiazole from 5-(2-hydroxyethyl)-4-methylthiazole: step 1/1. Catalyzes the phosphorylation of the hydroxyl group of 4-methyl-5-beta-hydroxyethylthiazole (THZ). The sequence is that of Hydroxyethylthiazole kinase from Desulfitobacterium hafniense (strain DSM 10664 / DCB-2).